The primary structure comprises 155 residues: S-ribosylhomocysteine lyase (155 aa).

The Fe cation site is built by histidine 58, histidine 62, and cysteine 125.

Belongs to the LuxS family. In terms of assembly, homodimer. The cofactor is Fe cation.

It carries out the reaction S-(5-deoxy-D-ribos-5-yl)-L-homocysteine = (S)-4,5-dihydroxypentane-2,3-dione + L-homocysteine. In terms of biological role, involved in the synthesis of autoinducer 2 (AI-2) which is secreted by bacteria and is used to communicate both the cell density and the metabolic potential of the environment. The regulation of gene expression in response to changes in cell density is called quorum sensing. Catalyzes the transformation of S-ribosylhomocysteine (RHC) to homocysteine (HC) and 4,5-dihydroxy-2,3-pentadione (DPD). This chain is S-ribosylhomocysteine lyase, found in Chromohalobacter salexigens (strain ATCC BAA-138 / DSM 3043 / CIP 106854 / NCIMB 13768 / 1H11).